A 200-amino-acid polypeptide reads, in one-letter code: High mobility group protein 1 homolog (200 aa).

DNA-binding regions (HMG box) lie at residues 11 to 81 (PRGR…QSYK) and 100 to 168 (PKRN…AEYK). The segment covering 64–86 (EKSMRDKVRYDREMQSYKPPKGE) has biased composition (basic and acidic residues). Disordered stretches follow at residues 64–103 (EKSM…PKRN) and 169–200 (AKAK…DDSD). A compositionally biased stretch (acidic residues) spans 190–200 (SSDDSSSDDSD).

It belongs to the HMGB family.

The protein resides in the nucleus. It is found in the chromosome. In terms of biological role, binds preferentially single-stranded DNA and unwinds double-stranded DNA. The chain is High mobility group protein 1 homolog (HMG1) from Strongylocentrotus purpuratus (Purple sea urchin).